A 555-amino-acid chain; its full sequence is MNDTKDNKVYSSARHSKYWQKLKAAAESKWSLAALFAQDNTRTQRFSAQSGALYMDYSKQCLDDTVLESLLNLANSCELSARIQALLQGAMVNTSEERAALHTALRLPTTANLQLDNQDVVADVHQSLGQVERLSERVRSGTWRGFSGKAITDVVNIGVGGSDLGPLMATTALDEWADTCVEVHFVSNMDGTQLDNLLKHLNPETTLFIISSKSFGTIDTLSNAKTALSWLLATAKLRAGTEDSVLRRHFIGISANSEKMSAWGIHPEHQLQLWEWVGGRFSLWSAIGLAIAIRIGMSGFKELLAGAHSMDEHFAQADFAENLPVLLGLIAVWNSTFLQVNAHTVLPYDGRLSYLPSYLTQLEMESNGKSVTQHGDRIDYDTCPILWGEIGSNAQHAFYQLLHQGTQQVSCDFIACVRRYSDKAKNTPLQQQHELSLANCLAQSRVLAFGNAAIAETDSQIACDADKYKYYRGNQPSTTLLIDELTPHSLGALIALYEHKVYVMASIWDINPFDQWGVEMGKQMAESVHDAMQQEGNAPFDTSTNQLLKHIKQLS.

Glutamate 365 serves as the catalytic Proton donor. Catalysis depends on residues histidine 396 and lysine 522.

The protein belongs to the GPI family.

It localises to the cytoplasm. It catalyses the reaction alpha-D-glucose 6-phosphate = beta-D-fructose 6-phosphate. It participates in carbohydrate biosynthesis; gluconeogenesis. The protein operates within carbohydrate degradation; glycolysis; D-glyceraldehyde 3-phosphate and glycerone phosphate from D-glucose: step 2/4. Functionally, catalyzes the reversible isomerization of glucose-6-phosphate to fructose-6-phosphate. In Psychrobacter cryohalolentis (strain ATCC BAA-1226 / DSM 17306 / VKM B-2378 / K5), this protein is Glucose-6-phosphate isomerase.